The sequence spans 219 residues: MAAARCLGWTLSPLWRWWQVRGLPPSSATGLCSRGRTYSRTALYELLGVPSTATQAQIKAAYYRQSFLYHPDRNPGSAEAAERFTRVSEAYLVLGSTILRRKYDRGLLSDQDLRGPGVKPSKTPVADPAPPRPPPYTPRAPGGSRASPGDGRTMFDFDAFYQAHYGEQLERERRLRARREALRKKQENQANKGTSWDDTRDATFFVVLFLIFVFVGFRI.

The transit peptide at 1-38 (MAAARCLGWTLSPLWRWWQVRGLPPSSATGLCSRGRTY) directs the protein to the mitochondrion. In terms of domain architecture, J spans 42–107 (ALYELLGVPS…ILRRKYDRGL (66 aa)). The disordered stretch occupies residues 109–148 (SDQDLRGPGVKPSKTPVADPAPPRPPPYTPRAPGGSRASP). Pro residues predominate over residues 127-138 (DPAPPRPPPYTP). Residues 202-218 (ATFFVVLFLIFVFVGFR) traverse the membrane as a helical segment.

In terms of assembly, associates with the ATP synthase complex. Interacts with MT-ATP6; interaction is direct. Interacts with ATP5MC2; interaction is direct. As to expression, in brain, expressed in gray matter structures.

The protein localises to the mitochondrion inner membrane. Its function is as follows. Mitochondrial protein enriched in neurons that acts as a regulator of mitochondrial respiration. Associates with the ATP synthase complex and facilitates ATP synthesis. May be a chaperone protein involved in the turnover of the subunits of mitochondrial complex I N-module. It facilitates the degradation of N-module subunits damaged by oxidative stress, and contributes to complex I functional efficiency. The sequence is that of DnaJ homolog subfamily C member 30, mitochondrial from Mus musculus (Mouse).